A 220-amino-acid chain; its full sequence is General secretion pathway protein B (220 aa).

Residues 17–37 (IPGYLLVVYALLLFTLGWFGH) form a helical membrane-spanning segment. The span at 85 to 107 (AENSATQTAASGSQTSASSQEAT) shows a compositional bias: low complexity. Disordered stretches follow at residues 85 to 114 (AENS…KPAK) and 188 to 220 (QDWP…TTKK). Polar residues predominate over residues 202–220 (GNEQEPTSKPEQTVRTTKK).

The protein belongs to the ExeB/OutB/PulB family.

The protein localises to the cell inner membrane. Functionally, out proteins are required for the translocation of pectate lyases and cellulases across the outer membrane. This is General secretion pathway protein B (outB) from Dickeya dadantii (strain 3937) (Erwinia chrysanthemi (strain 3937)).